The chain runs to 437 residues: Glutamyl-tRNA reductase (437 aa).

Residues 49–52 (TCNR), Ser-109, 114–116 (EGQ), and Gln-120 contribute to the substrate site. Cys-50 functions as the Nucleophile in the catalytic mechanism. Residue 198-203 (GAGRMS) participates in NADP(+) binding.

The protein belongs to the glutamyl-tRNA reductase family. In terms of assembly, homodimer.

The enzyme catalyses (S)-4-amino-5-oxopentanoate + tRNA(Glu) + NADP(+) = L-glutamyl-tRNA(Glu) + NADPH + H(+). Its pathway is porphyrin-containing compound metabolism; protoporphyrin-IX biosynthesis; 5-aminolevulinate from L-glutamyl-tRNA(Glu): step 1/2. It participates in porphyrin-containing compound metabolism; chlorophyll biosynthesis. Catalyzes the NADPH-dependent reduction of glutamyl-tRNA(Glu) to glutamate 1-semialdehyde (GSA). This chain is Glutamyl-tRNA reductase, found in Prochlorococcus marinus (strain SARG / CCMP1375 / SS120).